The sequence spans 331 residues: Protein RecA (331 aa).

66-73 (GPESSGKT) contributes to the ATP binding site.

The protein belongs to the RecA family.

Its subcellular location is the cytoplasm. In terms of biological role, can catalyze the hydrolysis of ATP in the presence of single-stranded DNA, the ATP-dependent uptake of single-stranded DNA by duplex DNA, and the ATP-dependent hybridization of homologous single-stranded DNAs. It interacts with LexA causing its activation and leading to its autocatalytic cleavage. This Acholeplasma laidlawii protein is Protein RecA.